We begin with the raw amino-acid sequence, 1371 residues long: DNA-directed RNA polymerase subunit beta'' (1371 aa).

Zn(2+)-binding residues include Cys220, Cys293, Cys300, and Cys303.

Belongs to the RNA polymerase beta' chain family. RpoC2 subfamily. In terms of assembly, in plastids the minimal PEP RNA polymerase catalytic core is composed of four subunits: alpha, beta, beta', and beta''. When a (nuclear-encoded) sigma factor is associated with the core the holoenzyme is formed, which can initiate transcription. Zn(2+) is required as a cofactor.

It is found in the plastid. The protein resides in the chloroplast. The enzyme catalyses RNA(n) + a ribonucleoside 5'-triphosphate = RNA(n+1) + diphosphate. Its function is as follows. DNA-dependent RNA polymerase catalyzes the transcription of DNA into RNA using the four ribonucleoside triphosphates as substrates. In Lobularia maritima (Sweet alyssum), this protein is DNA-directed RNA polymerase subunit beta''.